The sequence spans 232 residues: Adenosylcobinamide-GDP ribazoletransferase (232 aa).

6 helical membrane passes run 32-52, 54-74, 102-122, 126-146, 172-192, and 212-232; these read PIYF…GGSF, NFLL…LFHF, VGPF…TLYL, PITF…LMFF, FFLL…VVTV, and DVLG…LGVV.

Belongs to the CobS family. It depends on Mg(2+) as a cofactor.

It localises to the cell inner membrane. The catalysed reaction is alpha-ribazole + adenosylcob(III)inamide-GDP = adenosylcob(III)alamin + GMP + H(+). It carries out the reaction alpha-ribazole 5'-phosphate + adenosylcob(III)inamide-GDP = adenosylcob(III)alamin 5'-phosphate + GMP + H(+). Its pathway is cofactor biosynthesis; adenosylcobalamin biosynthesis; adenosylcobalamin from cob(II)yrinate a,c-diamide: step 7/7. Joins adenosylcobinamide-GDP and alpha-ribazole to generate adenosylcobalamin (Ado-cobalamin). Also synthesizes adenosylcobalamin 5'-phosphate from adenosylcobinamide-GDP and alpha-ribazole 5'-phosphate. This Thermosipho melanesiensis (strain DSM 12029 / CIP 104789 / BI429) protein is Adenosylcobinamide-GDP ribazoletransferase.